The primary structure comprises 507 residues: Steroid 17-alpha-hydroxylase/17,20 lyase (507 aa).

C441 lines the heme pocket.

The protein belongs to the cytochrome P450 family. Requires heme as cofactor.

Its subcellular location is the endoplasmic reticulum membrane. It is found in the microsome membrane. The catalysed reaction is a C21-steroid + reduced [NADPH--hemoprotein reductase] + O2 = a 17alpha-hydroxy-C21-steroid + oxidized [NADPH--hemoprotein reductase] + H2O + H(+). It carries out the reaction progesterone + reduced [NADPH--hemoprotein reductase] + O2 = 17alpha-hydroxyprogesterone + oxidized [NADPH--hemoprotein reductase] + H2O + H(+). The enzyme catalyses pregnenolone + reduced [NADPH--hemoprotein reductase] + O2 = 17alpha-hydroxypregnenolone + oxidized [NADPH--hemoprotein reductase] + H2O + H(+). It catalyses the reaction 17alpha-hydroxyprogesterone + reduced [NADPH--hemoprotein reductase] + O2 = androst-4-ene-3,17-dione + acetate + oxidized [NADPH--hemoprotein reductase] + H2O + 2 H(+). The catalysed reaction is 17alpha-hydroxyprogesterone + reduced [NADPH--hemoprotein reductase] + O2 = 16alpha,17alpha-dihydroxyprogesterone + oxidized [NADPH--hemoprotein reductase] + H2O + H(+). It carries out the reaction 16alpha,17alpha-dihydroxyprogesterone + reduced [NADPH--hemoprotein reductase] + O2 = 6beta,16alpha,17alpha-trihydroxyprogesterone + oxidized [NADPH--hemoprotein reductase] + H2O + H(+). The enzyme catalyses 17alpha-hydroxypregnenolone + reduced [NADPH--hemoprotein reductase] + O2 = 3beta-hydroxyandrost-5-en-17-one + acetate + oxidized [NADPH--hemoprotein reductase] + H2O + 2 H(+). It catalyses the reaction 16alpha,17alpha-dihydroxypregnenolone + reduced [NADPH--hemoprotein reductase] + O2 = 3beta,16alpha-dihydroxy-androst-5-en-17-one + acetate + oxidized [NADPH--hemoprotein reductase] + H2O + 2 H(+). The catalysed reaction is 3beta-hydroxyandrost-5-en-17-one + reduced [NADPH--hemoprotein reductase] + O2 = 3beta,16alpha-dihydroxy-androst-5-en-17-one + oxidized [NADPH--hemoprotein reductase] + H2O + H(+). It carries out the reaction androst-4-ene-3,17-dione + reduced [NADPH--hemoprotein reductase] + O2 = 16alpha-hydroxyandrost-4-ene-3,17-dione + oxidized [NADPH--hemoprotein reductase] + H2O + H(+). The protein operates within steroid hormone biosynthesis. It participates in steroid biosynthesis; glucocorticoid biosynthesis. Its activity is regulated as follows. Regulated predominantly by intracellular cAMP levels. The 17,20-lyase activity is stimulated by cytochrome b5, which acts as an allosteric effector increasing the Vmax of the lyase activity. Functionally, a cytochrome P450 monooxygenase involved in corticoid and androgen biosynthesis. Catalyzes 17-alpha hydroxylation of C21 steroids, which is common for both pathways. A second oxidative step, required only for androgen synthesis, involves an acyl-carbon cleavage. The 17-alpha hydroxy intermediates, as part of adrenal glucocorticoids biosynthesis pathway, are precursors of cortisol. Hydroxylates steroid hormones, pregnenolone and progesterone to form 17-alpha hydroxy metabolites, followed by the cleavage of the C17-C20 bond to form C19 steroids, dehydroepiandrosterone (DHEA) and androstenedione. Has 16-alpha hydroxylase activity. Catalyzes 16-alpha hydroxylation of 17-alpha hydroxy pregnenolone, followed by the cleavage of the C17-C20 bond to form 16-alpha-hydroxy DHEA. Also 16-alpha hydroxylates androgens, relevant for estriol synthesis. Mechanistically, uses molecular oxygen inserting one oxygen atom into a substrate, and reducing the second into a water molecule, with two electrons provided by NADPH via cytochrome P450 reductase (CPR; NADPH-ferrihemoprotein reductase). The sequence is that of Steroid 17-alpha-hydroxylase/17,20 lyase (Cyp17a1) from Rattus norvegicus (Rat).